A 630-amino-acid polypeptide reads, in one-letter code: DNA mismatch repair protein MutL (630 aa).

Disordered regions lie at residues 361–386 (VLSS…APAE) and 407–431 (FERK…GQAE). The span at 407-421 (FERKQEEEVGEERCS) shows a compositional bias: basic and acidic residues.

Belongs to the DNA mismatch repair MutL/HexB family.

This protein is involved in the repair of mismatches in DNA. It is required for dam-dependent methyl-directed DNA mismatch repair. May act as a 'molecular matchmaker', a protein that promotes the formation of a stable complex between two or more DNA-binding proteins in an ATP-dependent manner without itself being part of a final effector complex. The polypeptide is DNA mismatch repair protein MutL (Geobacillus kaustophilus (strain HTA426)).